We begin with the raw amino-acid sequence, 251 residues long: Diphthine synthase (251 aa).

Residues D83, L86, 111-112 (SI), L163, and L205 each bind S-adenosyl-L-methionine.

This sequence belongs to the diphthine synthase family. Homodimer.

The enzyme catalyses 2-[(3S)-amino-3-carboxypropyl]-L-histidyl-[translation elongation factor 2] + 3 S-adenosyl-L-methionine = diphthine-[translation elongation factor 2] + 3 S-adenosyl-L-homocysteine + 3 H(+). Its pathway is protein modification; peptidyl-diphthamide biosynthesis. S-adenosyl-L-methionine-dependent methyltransferase that catalyzes the trimethylation of the amino group of the modified target histidine residue in translation elongation factor 2 (EF-2), to form an intermediate called diphthine. The three successive methylation reactions represent the second step of diphthamide biosynthesis. In Pyrobaculum calidifontis (strain DSM 21063 / JCM 11548 / VA1), this protein is Diphthine synthase.